The chain runs to 85 residues: CRISPR-associated endoribonuclease Cas2 2 (85 aa).

Asp-8 provides a ligand contact to Mg(2+).

The protein belongs to the CRISPR-associated endoribonuclease Cas2 protein family. As to quaternary structure, homodimer, forms a heterotetramer with a Cas1 homodimer. The cofactor is Mg(2+).

In terms of biological role, CRISPR (clustered regularly interspaced short palindromic repeat), is an adaptive immune system that provides protection against mobile genetic elements (viruses, transposable elements and conjugative plasmids). CRISPR clusters contain sequences complementary to antecedent mobile elements and target invading nucleic acids. CRISPR clusters are transcribed and processed into CRISPR RNA (crRNA). Functions as a ssRNA-specific endoribonuclease. Involved in the integration of spacer DNA into the CRISPR cassette. In Chloroflexus aurantiacus (strain ATCC 29366 / DSM 635 / J-10-fl), this protein is CRISPR-associated endoribonuclease Cas2 2.